The chain runs to 597 residues: Serine/arginine repetitive matrix protein 3 (597 aa).

Residues 1 to 31 (MSSTVNNGAASMQSTPDAANGFPQPSSSSGT) are compositionally biased toward polar residues. Residues 1 to 47 (MSSTVNNGAASMQSTPDAANGFPQPSSSSGTWPRAEEELRAAEPGLV) form a disordered region. The CWF21 domain occupies 55-98 (LDHERKRRVELKCMELQEMMEEQGYSEEEIRQKVGTFRQMLMEK). Positions 99-109 (EGVLTREDRPG) are enriched in basic and acidic residues. A disordered region spans residues 99–597 (EGVLTREDRP…GPAPLPPPAA (499 aa)). Composition is skewed to basic residues over residues 149 to 158 (RGHRGYRTKH), 168 to 186 (PKKK…KKRR), 199 to 211 (LRKK…KHRR), and 219 to 243 (RRKR…KKRP). Low complexity-rich tracts occupy residues 257 to 278 (SGSS…PSRL) and 291 to 313 (SQRS…SPQR). Gly residues-rich tracts occupy residues 315-328 (GGSG…GGRP) and 374-383 (GRGGRAAGGA). Over residues 384–412 (GRRRRRRRRRRRSRSSASAPRRRGRRRPR) the composition is skewed to basic residues. Low complexity-rich tracts occupy residues 417 to 433 (RGSS…SDSG), 466 to 476 (RPASTSPSPGA), and 488 to 507 (SSRS…SPSK). The segment covering 530-549 (LSRDKDGEGRARHSEAEATR) has biased composition (basic and acidic residues). The segment covering 550 to 565 (ARRRSRSYSPIRKRRR) has biased composition (basic residues).

The protein belongs to the CWC21 family. Expressed in breast cancer cell lines.

Its function is as follows. May play a role in regulating breast cancer cell invasiveness. May be involved in RYBP-mediated breast cancer progression. This chain is Serine/arginine repetitive matrix protein 3 (SRRM3), found in Homo sapiens (Human).